Reading from the N-terminus, the 66-residue chain is Large ribosomal subunit protein uL29 (66 aa).

The protein belongs to the universal ribosomal protein uL29 family.

This Hydrogenobaculum sp. (strain Y04AAS1) protein is Large ribosomal subunit protein uL29.